Here is a 294-residue protein sequence, read N- to C-terminus: 4-hydroxy-tetrahydrodipicolinate synthase (294 aa).

Residue Thr44 participates in pyruvate binding. Catalysis depends on Tyr132, which acts as the Proton donor/acceptor. Residue Lys161 is the Schiff-base intermediate with substrate of the active site. Ile206 lines the pyruvate pocket.

The protein belongs to the DapA family. In terms of assembly, homotetramer; dimer of dimers.

It localises to the cytoplasm. The enzyme catalyses L-aspartate 4-semialdehyde + pyruvate = (2S,4S)-4-hydroxy-2,3,4,5-tetrahydrodipicolinate + H2O + H(+). It functions in the pathway amino-acid biosynthesis; L-lysine biosynthesis via DAP pathway; (S)-tetrahydrodipicolinate from L-aspartate: step 3/4. Catalyzes the condensation of (S)-aspartate-beta-semialdehyde [(S)-ASA] and pyruvate to 4-hydroxy-tetrahydrodipicolinate (HTPA). The chain is 4-hydroxy-tetrahydrodipicolinate synthase from Thermotoga sp. (strain RQ2).